A 1162-amino-acid chain; its full sequence is DNA-directed RNA polymerase subunit beta (1162 aa).

It belongs to the RNA polymerase beta chain family. In terms of assembly, the RNAP catalytic core consists of 2 alpha, 1 beta, 1 beta' and 1 omega subunit. When a sigma factor is associated with the core the holoenzyme is formed, which can initiate transcription.

The catalysed reaction is RNA(n) + a ribonucleoside 5'-triphosphate = RNA(n+1) + diphosphate. Functionally, DNA-dependent RNA polymerase catalyzes the transcription of DNA into RNA using the four ribonucleoside triphosphates as substrates. This is DNA-directed RNA polymerase subunit beta from Clavibacter sepedonicus (Clavibacter michiganensis subsp. sepedonicus).